The primary structure comprises 613 residues: Epsin-2 (613 aa).

Residues 11-143 (NMMKGYSSTQ…NDEERLREER (133 aa)) enclose the ENTH domain. 3 disordered regions span residues 140–208 (REER…DDED), 323–351 (TAAN…PFSM), and 356–375 (RQKQ…EARQ). Residues 148–167 (RNRRANRAARPRPRRQRTRS) show a composition bias toward basic residues. A Phosphothreonine modification is found at Thr-165. Ser-167 bears the Phosphoserine mark. 2 UIM domains span residues 175–194 (SYQD…AQED) and 206–225 (DEDP…EELK). A compositionally biased stretch (basic and acidic residues) spans 179-188 (DLEKALEESR). Over residues 323-339 (TAANMQQQQQQPADFQQ) the composition is skewed to low complexity. Residues 340–350 (PLPTGSNNPFS) are compositionally biased toward polar residues. Residue Lys-426 forms a Glycyl lysine isopeptide (Lys-Gly) (interchain with G-Cter in ubiquitin) linkage. Thr-430 is modified (phosphothreonine). Position 434 is a phosphoserine (Ser-434). Thr-450, Thr-468, and Thr-470 each carry phosphothreonine. The segment covering 471–512 (GTFINSQGTGYKQVTNEPKNNPFLSNQYTGLPSTNIVPTQTG) has biased composition (polar residues). The disordered stretch occupies residues 471 to 613 (GTFINSQGTG…PDQGVSLIDL (143 aa)). Positions 526–600 (SPQQNPTGIS…QQQQQQQQQQ (75 aa)) are enriched in low complexity.

It belongs to the epsin family. Post-translationally, phosphorylated by PRK1.

It localises to the cytoplasm. It is found in the membrane. Functionally, binds to membranes enriched in phosphatidylinositol 3,5-bisphosphate (PtdIns(3,5)P2) and phosphatidylinositol 4,5-bisphosphate (PtdIns(4,5)P2). Required for endocytosis and localization of actin. The sequence is that of Epsin-2 (ENT2) from Saccharomyces cerevisiae (strain ATCC 204508 / S288c) (Baker's yeast).